The primary structure comprises 407 residues: Accessory Sec system protein translocase subunit SecY2 (407 aa).

The next 10 helical transmembrane spans lie at 22–42 (IAFTILILLIYILGSKITIVD), 68–88 (LNVFSLGLGPWLTAMIIISLI), 108–128 (EKFLTLGLSIIQGYFVINQFV), 136–156 (FTELLLLLILVTGAMLMMWLA), 169–189 (PIVLLSVIKSMFTQSLPIVSI), 191–211 (ILMLVVMVILIIVALFILLLT), 245–265 (ISIMISLSVFLLLTSTINLIF), 280–300 (FGHYMGVTIYLILQTVLGYLL), 343–363 (WFGTTIVTAIIGVPLYISLLV), and 366–386 (LSEYIYFAVQLMIMVYLAMNI).

It belongs to the SecY/SEC61-alpha family. SecY2 subfamily. Component of the accessory SecA2/SecY2 protein translocase complex required to export cell wall proteins. May form heterotrimers with SecE and SecG subunits.

It is found in the cell membrane. Part of the accessory SecA2/SecY2 system specifically required for export of possible cell wall proteins. The central subunit of a protein translocation channel. In Staphylococcus pseudintermedius (strain ED99), this protein is Accessory Sec system protein translocase subunit SecY2.